The primary structure comprises 252 residues: MQLKPMEINPEMLNKVLTRLGVAGQWRFEDVLGLEEESLGSVPAPACALLLLFPLTAQRCFKLGREAASRFHHPDYPGRLFILLVSQHENFRKKQIEELKGQEVSPKVYFMKQTIGNSCGTIGLIHAVANNQDKLEFEDGSVLKQFLSETEKLSPEDRAKCFEKNEAIQAAHDAVAQEGQCRVDDKVNFHFILFNNVDGHLYELDGRMPFPVNHGTSSEDSLLQDAAKVCREFTEREQGEVRFSAVALCKAA.

Position 1 is an N-acetylmethionine (Met1). Positions 2–250 constitute a UCH catalytic domain; that stretch reads QLKPMEINPE…VRFSAVALCK (249 aa). Residues 5–10 form an interaction with ubiquitin region; that stretch reads PMEINP. Cys119 acts as the Nucleophile in catalysis. Ser154 carries the phosphoserine modification. The Proton donor role is filled by His190. The interaction with ubiquitin stretch occupies residues 240-245; it reads EVRFSA. Cys249 is lipidated: S-farnesyl cysteine. Residues 250 to 252 constitute a propeptide, removed in mature form; sequence KAA.

The protein belongs to the peptidase C12 family. As to quaternary structure, monomer. Homodimer. Interacts with COPS5 and SNCA. Post-translationally, O-glycosylated. In terms of tissue distribution, neurons and cells of the diffuse neuroendocrine system and their tumors.

The protein resides in the cytoplasm. It localises to the endoplasmic reticulum membrane. The enzyme catalyses Thiol-dependent hydrolysis of ester, thioester, amide, peptide and isopeptide bonds formed by the C-terminal Gly of ubiquitin (a 76-residue protein attached to proteins as an intracellular targeting signal).. In terms of biological role, ubiquitin-protein hydrolase involved both in the processing of ubiquitin precursors and of ubiquitinated proteins. This enzyme is a thiol protease that recognizes and hydrolyzes a peptide bond at the C-terminal glycine of ubiquitin. Also binds to free monoubiquitin and may prevent its degradation in lysosomes. The homodimer may have ATP-independent ubiquitin ligase activity. The chain is Ubiquitin carboxyl-terminal hydrolase isozyme L1 (UCHL1) from Bos taurus (Bovine).